A 165-amino-acid chain; its full sequence is 2-C-methyl-D-erythritol 2,4-cyclodiphosphate synthase (165 aa).

The a divalent metal cation site is built by aspartate 13 and histidine 15. 4-CDP-2-C-methyl-D-erythritol 2-phosphate is bound by residues 13–15 (DRH) and 39–40 (HS). Histidine 47 is an a divalent metal cation binding site. 4-CDP-2-C-methyl-D-erythritol 2-phosphate contacts are provided by residues 61–63 (DIG) and phenylalanine 141.

It belongs to the IspF family. In terms of assembly, homotrimer. The cofactor is a divalent metal cation.

It carries out the reaction 4-CDP-2-C-methyl-D-erythritol 2-phosphate = 2-C-methyl-D-erythritol 2,4-cyclic diphosphate + CMP. Its pathway is isoprenoid biosynthesis; isopentenyl diphosphate biosynthesis via DXP pathway; isopentenyl diphosphate from 1-deoxy-D-xylulose 5-phosphate: step 4/6. Its function is as follows. Involved in the biosynthesis of isopentenyl diphosphate (IPP) and dimethylallyl diphosphate (DMAPP), two major building blocks of isoprenoid compounds. Catalyzes the conversion of 4-diphosphocytidyl-2-C-methyl-D-erythritol 2-phosphate (CDP-ME2P) to 2-C-methyl-D-erythritol 2,4-cyclodiphosphate (ME-CPP) with a corresponding release of cytidine 5-monophosphate (CMP). The protein is 2-C-methyl-D-erythritol 2,4-cyclodiphosphate synthase of Thermotoga maritima (strain ATCC 43589 / DSM 3109 / JCM 10099 / NBRC 100826 / MSB8).